Here is an 861-residue protein sequence, read N- to C-terminus: Protein argonaute-4 (861 aa).

The PAZ domain maps to 219-338 (PIIEFMCEVL…LPLEVCNIVA (120 aa)). Residues 509–820 (LIVVILPGKT…VAFRARYHLV (312 aa)) enclose the Piwi domain. Residues 825-846 (DSAEGSHVSGQSNGRDPQALAK) are disordered.

Belongs to the argonaute family. Ago subfamily. In terms of assembly, interacts with EIF4B, IMP8, PRMT5, TNRC6A and TNRC6B. Interacts with ZFP36. Ubiquitinated on surface-exposed lysines by a SCF-like E3 ubiquitin-protein ligase complex containing ZSWIM8 during target-directed microRNA degradation (TDMD), a process that mediates degradation of microRNAs (miRNAs). Ubiquitination by the SCF-like E3 ubiquitin-protein ligase complex containing ZSWIM8 leads to its subsequent degradation, thereby exposing miRNAs for degradation. ZSWIM8 recognizes and binds AGO4 when it is engaged with a TDMD target.

It is found in the cytoplasm. Its subcellular location is the P-body. Required for RNA-mediated gene silencing (RNAi). Binds to short RNAs such as microRNAs (miRNAs) and represses the translation of mRNAs which are complementary to them. Lacks endonuclease activity and does not appear to cleave target mRNAs. Also required for RNA-directed transcription and replication of the human hapatitis delta virus (HDV). The sequence is that of Protein argonaute-4 (AGO4) from Homo sapiens (Human).